A 414-amino-acid polypeptide reads, in one-letter code: MVSTFSRKNQNYKKDDLNQPSKDGRFGKYGGQYVPETLMPALFELETAASNAWKDKLFVKELNHLLKTYVGRETPLYEAKRLTEYYKTKKAIPKIWLKREDLNHTGAHKINNALGQALLAIRMGKKRIIAETGAGQHGVATATVCARFGLKCIIYMGAEDIKRQSLNVFRMKLLGAEVKVVNSGTATLKDATSEAIRDWVSNVESTHYILGSVAGPHPFPKIVRDFHAVIGEETKKQCLESFGSLPDILLACVGGGSNAMGLFHPFVKETSVRLIGVEAAGGGVDTDKHAATITKGSVGILHGSMSLLLQDDNGQVQEAHSISAGLDYPGVGPEHSHLKDIGRAEYGSVTDQEALDSLRLVSELEGIIPALETSHAFAWLDKLCPTLEKDTHIVINCSGRGDKDVNTVASSLDI.

The interval 1–26 (MVSTFSRKNQNYKKDDLNQPSKDGRF) is disordered. The span at 12-26 (YKKDDLNQPSKDGRF) shows a compositional bias: basic and acidic residues. N6-(pyridoxal phosphate)lysine is present on Lys109.

Belongs to the TrpB family. In terms of assembly, tetramer of two alpha and two beta chains. Requires pyridoxal 5'-phosphate as cofactor.

The enzyme catalyses (1S,2R)-1-C-(indol-3-yl)glycerol 3-phosphate + L-serine = D-glyceraldehyde 3-phosphate + L-tryptophan + H2O. It participates in amino-acid biosynthesis; L-tryptophan biosynthesis; L-tryptophan from chorismate: step 5/5. In terms of biological role, the beta subunit is responsible for the synthesis of L-tryptophan from indole and L-serine. In Prochlorococcus marinus (strain MIT 9215), this protein is Tryptophan synthase beta chain.